Consider the following 569-residue polypeptide: Glucose-6-phosphate isomerase, cytosolic 2 (569 aa).

E360 (proton donor) is an active-site residue. Residues H391 and K516 contribute to the active site.

This sequence belongs to the GPI family. Homodimer.

It is found in the cytoplasm. The enzyme catalyses alpha-D-glucose 6-phosphate = beta-D-fructose 6-phosphate. It participates in carbohydrate degradation; glycolysis; D-glyceraldehyde 3-phosphate and glycerone phosphate from D-glucose: step 2/4. This chain is Glucose-6-phosphate isomerase, cytosolic 2 (PGIC2), found in Clarkia concinna (Red ribbons).